Consider the following 876-residue polypeptide: MNMEPKYNPREVEAGRYEEWVKNDYFKPSEDKSKETYTIVIPPPNVTGKLHLGHAWDTTLQDIITRMKRMQGYDTLYLPGMDHAGIATQAKVDAKLKEQGISRHDIGREKFLEHAWSWKEEYASFIRQQWAKLGLGLDYSRERFTLDDGLSKAVRKVFVDLYNKGIIYRGERIINWDPEARTALSDIEVIHEDVQGHFYHFKYPYADGDGYIEIATTRPETMLGDTAIVVNPNDDRYKDVIGKKVILPIVGRELPILADEYVDIDFGSGAMKVTPAHDPNDFEIGQRHSLENIIVMDENGKMNDKADKYAGLDRFECRKQLVEDLKAQDLVIKIEEHVHSVGHSERSGAVVEPYLSTQWFVKMKPLAQRSLDNQKTDDRIDFYPPRFENTFNRWMEEIRDWTISRQLWWGHQIPAWYHKETGEIYVGEEAPKDIDNWVQDEDVLDTWFSSALWPFSTLGWPNIDADDFKRYYPTNALVTGYDIIFFWVARMIFQGLEFTDRRPFNDVLLHGLVRAEDGRKMSKSLGNGVDPMDVIEEYGADSLRYFLATGSSPGHDLRYSTEKVESVWNFINKIWNGARFSLMNIGDEFKFEDIDLTGNLSLADKWILTRLNETIETVTNLSEKYEFGEVGRALYNFIWDEFCDWYIEMSKIPMNGEDEAQKQTTRSVLSYTLDQIMRMLHPFMPFVTEKIWQSLPHEGETIVKASWPTVREELVFEESKQTMQQLVEIIKSVRQSRVEVNTPLSKAIPIYIQAKDENIKATLIENEDYIHKFCNPSDLTIDTHIDIPEKAMTAVVIAGKVVLPLEGLIDMDKEIARLEKELDKLQKELDRVDKKLSNENFVNKAPEKVINEEKEKQQRYQEKYDGVKNRIEQLKA.

A 'HIGH' region motif is present at residues P44–H54. A 'KMSKS' region motif is present at residues K520–S524. K523 provides a ligand contact to ATP. Positions L805–A876 form a coiled coil.

The protein belongs to the class-I aminoacyl-tRNA synthetase family. ValS type 1 subfamily. In terms of assembly, monomer.

It is found in the cytoplasm. It catalyses the reaction tRNA(Val) + L-valine + ATP = L-valyl-tRNA(Val) + AMP + diphosphate. Functionally, catalyzes the attachment of valine to tRNA(Val). As ValRS can inadvertently accommodate and process structurally similar amino acids such as threonine, to avoid such errors, it has a 'posttransfer' editing activity that hydrolyzes mischarged Thr-tRNA(Val) in a tRNA-dependent manner. The chain is Valine--tRNA ligase from Staphylococcus haemolyticus (strain JCSC1435).